We begin with the raw amino-acid sequence, 156 residues long: Small ribosomal subunit protein uS7 (156 aa).

Belongs to the universal ribosomal protein uS7 family. Part of the 30S ribosomal subunit. Contacts proteins S9 and S11.

Its function is as follows. One of the primary rRNA binding proteins, it binds directly to 16S rRNA where it nucleates assembly of the head domain of the 30S subunit. Is located at the subunit interface close to the decoding center, probably blocks exit of the E-site tRNA. The sequence is that of Small ribosomal subunit protein uS7 from Mycobacterium leprae (strain Br4923).